Here is a 156-residue protein sequence, read N- to C-terminus: ATP synthase subunit b (156 aa).

Residues Leu-7–Ile-29 traverse the membrane as a helical segment.

It belongs to the ATPase B chain family. F-type ATPases have 2 components, F(1) - the catalytic core - and F(0) - the membrane proton channel. F(1) has five subunits: alpha(3), beta(3), gamma(1), delta(1), epsilon(1). F(0) has three main subunits: a(1), b(2) and c(10-14). The alpha and beta chains form an alternating ring which encloses part of the gamma chain. F(1) is attached to F(0) by a central stalk formed by the gamma and epsilon chains, while a peripheral stalk is formed by the delta and b chains.

The protein resides in the cell inner membrane. F(1)F(0) ATP synthase produces ATP from ADP in the presence of a proton or sodium gradient. F-type ATPases consist of two structural domains, F(1) containing the extramembraneous catalytic core and F(0) containing the membrane proton channel, linked together by a central stalk and a peripheral stalk. During catalysis, ATP synthesis in the catalytic domain of F(1) is coupled via a rotary mechanism of the central stalk subunits to proton translocation. Its function is as follows. Component of the F(0) channel, it forms part of the peripheral stalk, linking F(1) to F(0). The protein is ATP synthase subunit b of Mannheimia succiniciproducens (strain KCTC 0769BP / MBEL55E).